The primary structure comprises 27 residues: 23S rRNA methylase leader peptide (27 aa).

Functionally, this peptide is involved in the control mechanism of the synthesis of the erythromycin resistance protein. The polypeptide is 23S rRNA methylase leader peptide (ermC) (Enterococcus faecalis (Streptococcus faecalis)).